A 249-amino-acid chain; its full sequence is Probable transcriptional regulatory protein ERGA_CDS_03720 (249 aa).

The tract at residues 1 to 21 (MAGHSQFANIKHRKGAQDAKR) is disordered.

The protein belongs to the TACO1 family.

The protein resides in the cytoplasm. The polypeptide is Probable transcriptional regulatory protein ERGA_CDS_03720 (Ehrlichia ruminantium (strain Gardel)).